A 222-amino-acid chain; its full sequence is GTP cyclohydrolase 1 (222 aa).

Residues C111, H114, and C182 each contribute to the Zn(2+) site.

Belongs to the GTP cyclohydrolase I family. Toroid-shaped homodecamer, composed of two pentamers of five dimers.

It carries out the reaction GTP + H2O = 7,8-dihydroneopterin 3'-triphosphate + formate + H(+). It functions in the pathway cofactor biosynthesis; 7,8-dihydroneopterin triphosphate biosynthesis; 7,8-dihydroneopterin triphosphate from GTP: step 1/1. This chain is GTP cyclohydrolase 1, found in Klebsiella pneumoniae subsp. pneumoniae (strain ATCC 700721 / MGH 78578).